We begin with the raw amino-acid sequence, 45 residues long: Large ribosomal subunit protein bL34 (45 aa).

Basic and acidic residues predominate over residues 1-10 (MTKRTLEGTN). A disordered region spans residues 1-27 (MTKRTLEGTNRKRKRTSGFRARMRSAT). Over residues 11-23 (RKRKRTSGFRARM) the composition is skewed to basic residues.

The protein belongs to the bacterial ribosomal protein bL34 family.

This is Large ribosomal subunit protein bL34 from Synechococcus elongatus (strain ATCC 33912 / PCC 7942 / FACHB-805) (Anacystis nidulans R2).